We begin with the raw amino-acid sequence, 175 residues long: Ribosome maturation factor RimM (175 aa).

The PRC barrel domain maps to 100 to 173; it reads EGEYYFHEII…IIIIRPMEGL (74 aa).

It belongs to the RimM family. As to quaternary structure, binds ribosomal protein uS19.

Its subcellular location is the cytoplasm. An accessory protein needed during the final step in the assembly of 30S ribosomal subunit, possibly for assembly of the head region. Essential for efficient processing of 16S rRNA. May be needed both before and after RbfA during the maturation of 16S rRNA. It has affinity for free ribosomal 30S subunits but not for 70S ribosomes. This chain is Ribosome maturation factor RimM, found in Geobacillus thermodenitrificans (strain NG80-2).